The chain runs to 488 residues: Histamine H1 receptor (488 aa).

Over methionine 1 to proline 38 the chain is Extracellular. N-linked (GlcNAc...) asparagine glycans are attached at residues asparagine 14 and asparagine 27. Residues leucine 39 to tyrosine 59 form a helical membrane-spanning segment. Residues alanine 60–leucine 73 lie on the Cytoplasmic side of the membrane. Residues tyrosine 74–histidine 98 traverse the membrane as a helical segment. The Extracellular portion of the chain corresponds to arginine 99 to arginine 106. The helical transmembrane segment at proline 107–isoleucine 132 threads the bilayer. A disulfide bond links cysteine 109 and cysteine 189. The histamine site is built by aspartate 116 and threonine 121. The tract at residues aspartate 116–threonine 121 is important for agonist binding. The Cytoplasmic portion of the chain corresponds to aspartate 133 to alanine 153. Residues threonine 149 and threonine 151 each carry the phosphothreonine modification. Residues serine 154–glycine 173 traverse the membrane as a helical segment. Topologically, residues tryptophan 174–threonine 197 are extracellular. The chain crosses the membrane as a helical span at residues tryptophan 198–isoleucine 220. Asparagine 207 contacts histamine. Residues arginine 221–glutamine 417 are Cytoplasmic-facing. Serine 239 bears the Phosphoserine mark. A compositionally biased stretch (basic and acidic residues) spans arginine 259 to lysine 274. The disordered stretch occupies residues arginine 259–serine 285. 5 positions are modified to phosphoserine: serine 345, serine 381, serine 383, serine 397, and serine 399. A helical membrane pass occupies residues leucine 418 to phenylalanine 441. Residues phenylalanine 425 to tryptophan 429 are important for agonist binding. Tyrosine 432 is a binding site for histamine. The cysteines at positions 442 and 445 are disulfide-linked. The Extracellular segment spans residues cysteine 442 to asparagine 447. The chain crosses the membrane as a helical span at residues glutamate 448 to proline 470. Topologically, residues leucine 471 to proline 488 are cytoplasmic.

This sequence belongs to the G-protein coupled receptor 1 family. Phosphorylation at sites in the second and third cytoplasmic loops independently contribute to agonist-induced receptor down-regulation.

The protein resides in the cell membrane. G-protein-coupled receptor for histamine, a biogenic amine that functions as an immune modulator and a neurotransmitter. Through the H1 receptor, histamine mediates the contraction of smooth muscles and increases capillary permeability due to contraction of terminal venules. Also mediates neurotransmission in the central nervous system and thereby regulates circadian rhythms, emotional and locomotor activities as well as cognitive functions. In Cavia porcellus (Guinea pig), this protein is Histamine H1 receptor.